Here is a 336-residue protein sequence, read N- to C-terminus: DNA-directed RNA polymerase subunit alpha (336 aa).

Positions Met-1–Asn-226 are alpha N-terminal domain (alpha-NTD). Positions Ala-241–Leu-336 are alpha C-terminal domain (alpha-CTD).

The protein belongs to the RNA polymerase alpha chain family. As to quaternary structure, homodimer. The RNAP catalytic core consists of 2 alpha, 1 beta, 1 beta' and 1 omega subunit. When a sigma factor is associated with the core the holoenzyme is formed, which can initiate transcription.

It catalyses the reaction RNA(n) + a ribonucleoside 5'-triphosphate = RNA(n+1) + diphosphate. DNA-dependent RNA polymerase catalyzes the transcription of DNA into RNA using the four ribonucleoside triphosphates as substrates. The polypeptide is DNA-directed RNA polymerase subunit alpha (Paenarthrobacter aurescens (strain TC1)).